We begin with the raw amino-acid sequence, 611 residues long: Dihydroxy-acid dehydratase (611 aa).

Asp81 serves as a coordination point for Mg(2+). Cys122 is a [2Fe-2S] cluster binding site. Residues Asp123 and Lys124 each contribute to the Mg(2+) site. The residue at position 124 (Lys124) is an N6-carboxylysine. Residue Cys195 coordinates [2Fe-2S] cluster. Glu491 is a Mg(2+) binding site. Residue Ser517 is the Proton acceptor of the active site.

It belongs to the IlvD/Edd family. Homodimer. The cofactor is [2Fe-2S] cluster. Mg(2+) is required as a cofactor.

It catalyses the reaction (2R)-2,3-dihydroxy-3-methylbutanoate = 3-methyl-2-oxobutanoate + H2O. The enzyme catalyses (2R,3R)-2,3-dihydroxy-3-methylpentanoate = (S)-3-methyl-2-oxopentanoate + H2O. It participates in amino-acid biosynthesis; L-isoleucine biosynthesis; L-isoleucine from 2-oxobutanoate: step 3/4. The protein operates within amino-acid biosynthesis; L-valine biosynthesis; L-valine from pyruvate: step 3/4. Its function is as follows. Functions in the biosynthesis of branched-chain amino acids. Catalyzes the dehydration of (2R,3R)-2,3-dihydroxy-3-methylpentanoate (2,3-dihydroxy-3-methylvalerate) into 2-oxo-3-methylpentanoate (2-oxo-3-methylvalerate) and of (2R)-2,3-dihydroxy-3-methylbutanoate (2,3-dihydroxyisovalerate) into 2-oxo-3-methylbutanoate (2-oxoisovalerate), the penultimate precursor to L-isoleucine and L-valine, respectively. The chain is Dihydroxy-acid dehydratase from Brucella melitensis biotype 1 (strain ATCC 23456 / CCUG 17765 / NCTC 10094 / 16M).